A 348-amino-acid polypeptide reads, in one-letter code: Probable malate dehydrogenase 2, mitochondrial (348 aa).

A mitochondrion-targeting transit peptide spans 1 to 9; the sequence is MNKILTRSF. 31-37 is a binding site for NAD(+); the sequence is GASGQIG. Positions 112 and 118 each coordinate substrate. Residues asparagine 125, glutamine 132, and 150 to 152 each bind NAD(+); that span reads VGN. Positions 152 and 183 each coordinate substrate. The active-site Proton acceptor is the histidine 208.

It belongs to the LDH/MDH superfamily. MDH type 2 family. In terms of assembly, homodimer.

It localises to the mitochondrion. The catalysed reaction is (S)-malate + NAD(+) = oxaloacetate + NADH + H(+). In terms of biological role, catalyzes the reversible oxidation of malate to oxaloacetate. This is Probable malate dehydrogenase 2, mitochondrial (mdhB) from Dictyostelium discoideum (Social amoeba).